Reading from the N-terminus, the 494-residue chain is Cytochrome P450 2C23 (494 aa).

Serine 131 carries the phosphoserine modification. N6-acetyllysine is present on residues lysine 253 and lysine 379. A heme-binding site is contributed by cysteine 439.

Belongs to the cytochrome P450 family. Requires heme as cofactor. In terms of tissue distribution, expressed in kidney and liver. Expressed in cortical tubules of kidney (at protein level).

It is found in the endoplasmic reticulum membrane. The protein resides in the microsome membrane. The enzyme catalyses (5Z,8Z,11Z,14Z)-eicosatetraenoate + reduced [NADPH--hemoprotein reductase] + O2 = (8R,9S)-epoxy-(5Z,11Z,14Z)-eicosatrienoate + oxidized [NADPH--hemoprotein reductase] + H2O + H(+). It carries out the reaction (5Z,8Z,11Z,14Z)-eicosatetraenoate + reduced [NADPH--hemoprotein reductase] + O2 = (11R,12S)-epoxy-(5Z,8Z,14Z)-eicosatrienoate + oxidized [NADPH--hemoprotein reductase] + H2O + H(+). The catalysed reaction is (5Z,8Z,11Z,14Z)-eicosatetraenoate + reduced [NADPH--hemoprotein reductase] + O2 = (11S,12R)-epoxy-(5Z,8Z,14Z)-eicosatrienoate + oxidized [NADPH--hemoprotein reductase] + H2O + H(+). It catalyses the reaction (5Z,8Z,11Z,14Z)-eicosatetraenoate + reduced [NADPH--hemoprotein reductase] + O2 = (14R,15S)-epoxy-(5Z,8Z,11Z)-eicosatrienoate + oxidized [NADPH--hemoprotein reductase] + H2O + H(+). The enzyme catalyses (5Z,8Z,11Z,14Z)-eicosatetraenoate + reduced [NADPH--hemoprotein reductase] + O2 = (14S,15R)-epoxy-(5Z,8Z,11Z)-eicosatrienoate + oxidized [NADPH--hemoprotein reductase] + H2O + H(+). It carries out the reaction (5Z,8Z,11Z,14Z,17Z)-eicosapentaenoate + reduced [NADPH--hemoprotein reductase] + O2 = 8,9-epoxy-(5Z,11Z,14Z,17Z)-eicosatetraenoate + oxidized [NADPH--hemoprotein reductase] + H2O + H(+). The catalysed reaction is (5Z,8Z,11Z,14Z,17Z)-eicosapentaenoate + reduced [NADPH--hemoprotein reductase] + O2 = 11,12-epoxy-(5Z,8Z,14Z,17Z)-eicosatetraenoate + oxidized [NADPH--hemoprotein reductase] + H2O + H(+). It catalyses the reaction (5Z,8Z,11Z,14Z,17Z)-eicosapentaenoate + reduced [NADPH--hemoprotein reductase] + O2 = 14,15-epoxy-(5Z,8Z,11Z,17Z)-eicosatetraenoate + oxidized [NADPH--hemoprotein reductase] + H2O + H(+). The enzyme catalyses (5Z,8Z,11Z,14Z,17Z)-eicosapentaenoate + reduced [NADPH--hemoprotein reductase] + O2 = (17R,18S)-epoxy-(5Z,8Z,11Z,14Z)-eicosatetraenoate + oxidized [NADPH--hemoprotein reductase] + H2O + H(+). It carries out the reaction (5Z,8Z,11Z,14Z,17Z)-eicosapentaenoate + reduced [NADPH--hemoprotein reductase] + O2 = (17S,18R)-epoxy-(5Z,8Z,11Z,14Z)-eicosatetraenoate + oxidized [NADPH--hemoprotein reductase] + H2O + H(+). The catalysed reaction is 20-hydroxy-(5Z,8Z,11Z,14Z)-eicosatetraenoate + reduced [NADPH--hemoprotein reductase] + O2 = 20-hydroxy-8,9-epoxy-(5Z,11Z,14Z)-eicosatrienoate + oxidized [NADPH--hemoprotein reductase] + H2O + H(+). It participates in lipid metabolism; arachidonate metabolism. In terms of biological role, a cytochrome P450 monooxygenase involved in polyunsaturated fatty acids (PUFAs) metabolism and signaling. Catalyzes preferentially the epoxidation of double bonds of PUFAs. Converts arachidonic acid (ARA, C20:4(n-6)) primarily to stereospecific products 8R,9S-, 11R,12S-, and 14S,15R-EET. Plays a major role in the formation of EETs and hydroxy-EETs (HEETs) in kidney. Via EETs may inhibit the epithelial sodium channels (ENaCs) in nephron segments, preventing excessive sodium absorption during high dietary salt intake. Participates in the formation of anti-inflammatory hydroxyepoxyeicosatrienoic acids (HEETs) by converting 20-hydroxyeicosatetraenoic acid (20-HETE) to 20,8,9-HEET, an activator of PPARA. Metabolizes eicosapentaenoic acid (EPA, C20:5(n-3)) to epoxyeicosatetraenoic acid (EETeTr) regioisomers, 8,9-, 11,12-, 14,15-, and 17,18-EETeTr, preferentially producing 17R,18S enantiomer. Mechanistically, uses molecular oxygen inserting one oxygen atom into a substrate, and reducing the second into a water molecule, with two electrons provided by NADPH via cytochrome P450 reductase (NADPH--hemoprotein reductase). The polypeptide is Cytochrome P450 2C23 (Rattus norvegicus (Rat)).